The following is a 661-amino-acid chain: Acyl-coenzyme A oxidase acox-1.2 (661 aa).

FAD-binding positions include 147-150 (YAQT), 155-156 (GS), and Gly-189. Substrate contacts are provided by residues 283–286 (KIGY) and Arg-293. FAD-binding positions include Arg-318 and 338–341 (QQHR). The ATP site is built by His-340, Ser-390, His-394, and Gln-402. Gly-409 lines the FAD pocket. Position 431–432 (431–432 (YE)) interacts with substrate. Glu-432 acts as the Proton acceptor in catalysis. Residue Glu-434 participates in FAD binding. Residues 525–528 (RASR) and Tyr-573 each bind ATP. The short motif at 659 to 661 (AKL) is the Microbody targeting signal element.

It belongs to the acyl-CoA oxidase family. As to quaternary structure, homodimer. Forms a heterodimer with acox-1.1. FAD serves as cofactor.

The protein localises to the peroxisome. The enzyme catalyses asc-omegaC5-CoA + O2 = asc-omegaDeltaC5-CoA + H2O2. The protein operates within lipid metabolism; peroxisomal fatty acid beta-oxidation. Its activity is regulated as follows. Activated by ATP. ATP binding leads to a conformational change that promotes FAD cofactor binding and enzyme activity. ATP binding likely occurs during acox-1.2 folding and/or dimer formation. The preference for processing substrates with shorter fatty acid chains is likely due to the closed conformation of the active site. Involved in the first step of peroxisomal beta-oxidation by catalyzing the desaturation of fatty acid-derived side chains of ascaroside pheromones, which regulates development and behavior. Specifically, shortens ascarosides with 5-carbon omega side chain (asc-omega-C5). Does not shorten indol-3-carbonyl(IC)-ascaroside with 7-carbon or 9-carbon side chains. Does not catalyze the desaturation of fatty acids or hydroxylated fatty acids. The polypeptide is Acyl-coenzyme A oxidase acox-1.2 (Caenorhabditis elegans).